We begin with the raw amino-acid sequence, 81 residues long: ATP synthase subunit c, chloroplastic (81 aa).

2 consecutive transmembrane segments (helical) span residues 7–27 (AASV…PGIG) and 57–77 (LAFM…LLFA).

The protein belongs to the ATPase C chain family. F-type ATPases have 2 components, F(1) - the catalytic core - and F(0) - the membrane proton channel. F(1) has five subunits: alpha(3), beta(3), gamma(1), delta(1), epsilon(1). F(0) has four main subunits: a(1), b(1), b'(1) and c(10-14). The alpha and beta chains form an alternating ring which encloses part of the gamma chain. F(1) is attached to F(0) by a central stalk formed by the gamma and epsilon chains, while a peripheral stalk is formed by the delta, b and b' chains.

It is found in the plastid. The protein localises to the chloroplast thylakoid membrane. F(1)F(0) ATP synthase produces ATP from ADP in the presence of a proton or sodium gradient. F-type ATPases consist of two structural domains, F(1) containing the extramembraneous catalytic core and F(0) containing the membrane proton channel, linked together by a central stalk and a peripheral stalk. During catalysis, ATP synthesis in the catalytic domain of F(1) is coupled via a rotary mechanism of the central stalk subunits to proton translocation. Functionally, key component of the F(0) channel; it plays a direct role in translocation across the membrane. A homomeric c-ring of between 10-14 subunits forms the central stalk rotor element with the F(1) delta and epsilon subunits. In Pelargonium hortorum (Common geranium), this protein is ATP synthase subunit c, chloroplastic.